A 410-amino-acid polypeptide reads, in one-letter code: Lissencephaly-1 homolog B (410 aa).

Residues 7-39 enclose the LisH domain; that stretch reads QRDELNRAIADYLRSNGYEEAYSTFKKEAELDV. Residues 56-82 adopt a coiled-coil conformation; that stretch reads TSVIRLQKKVMELESKLNEAKEEITLG. WD repeat units follow at residues 106 to 147, 148 to 187, 190 to 229, 232 to 271, 274 to 333, 336 to 377, and 379 to 410; these read GHRS…RTLK, GHTD…CIRT, GHDH…CVKT, GHRE…CKAE, EHEH…CLMT, GHDN…KTLS, and HEHF…WECR.

Belongs to the WD repeat LIS1/nudF family. In terms of assembly, can self-associate. Component of the cytosolic PAF-AH (I) heterotetrameric enzyme, which is composed of PAFAH1B1 (beta), PAFAH1B2 (alpha2) and PAFAH1B3 (alpha1) subunits. The catalytic activity of the enzyme resides in the alpha1 (PAFAH1B3) and alpha2 (PAFAH1B2) subunits, whereas the beta subunit (PAFAH1B1) has regulatory activity. Trimer formation is not essential for the catalytic activity. Interacts with dynein, dynactin, nde1 and ndel1. As to expression, enriched in the photoreceptor cell layer.

It is found in the cytoplasm. The protein localises to the cytoskeleton. Its subcellular location is the microtubule organizing center. It localises to the centrosome. Functionally, regulatory subunit (beta subunit) of the cytosolic type I platelet-activating factor (PAF) acetylhydrolase (PAF-AH (I)), an enzyme that catalyzes the hydrolyze of the acetyl group at the sn-2 position of PAF and its analogs and participates in the PAF inactivation. Regulates the PAF-AH (I) activity in a catalytic dimer composition-dependent manner. Positively regulates the activity of the minus-end directed microtubule motor protein dynein. May enhance dynein-mediated microtubule sliding by targeting dynein to the microtubule plus end. Required for several dynein- and microtubule-dependent processes such as the maintenance of Golgi integrity, the peripheral transport of microtubule fragments and the coupling of the nucleus and centrosome. May be required for proliferation of neuronal precursors and neuronal migration. Involved in the positioning of nuclei in photoreceptor cells. The chain is Lissencephaly-1 homolog B (pafah1b1b) from Danio rerio (Zebrafish).